A 642-amino-acid chain; its full sequence is MPVITLPDGSQRHFDHPVSPLDVARDIGPGLAKACIAGRVNGELVDAGDLIESDAQLAIITIKDAEGLEIMRHSCAHLLGHAIKQLWPDTKMAIGPVIDNGFYYDVDIDRTLTQEDLDLLEKRMHELADKDYDVIKKKVSWQEARDTFAARGEDYKVAILDENISHDDRPGLYHHEEYVDMCRGPHVPNMRFCHHFKLQKTSGAYWRGDSKNKMLQRIYGTAWADKKQLNAYLQRLEEAAKRDHRKIGKQLDLYHMQEEAPGMVFWHNDGWTIFRELEAFVRMKLKEYQYQEVKGPFMMDRVLWEKTGHWENYKDAMFTTSSENREYCIKPMNCPGHVQIFNQGLKSYRDLPLRMGEFGSCHRNEPSGSLHGLMRVRGFTQDDAHIFCTEEQVRAEVNECIRMVYDVYGTFGFDKIAVKLSTRPEKRIGTDDMWTRAEEDLAAALTENGIPFEYQPGEGAFYGPKIEFTLHDCLDRAWQCGTVQLDFFLPGRLGASYVGENNDRVVPVMIHRAILGSMERFIGILTEEYAGFYPTWIAPVQVVVMNITDSQSDYVQQLTKKLQDAGIRVKADLRNEKIGFKIREHTLRRVPYMLVCGDKEVESGKVAVRTRRGKDLGSLDVNEVVDKLLKEIRSRSLHQLEE.

Residues 1–61 form the TGS domain; that stretch reads MPVITLPDGS…ESDAQLAIIT (61 aa). The tract at residues 243–534 is catalytic; sequence DHRKIGKQLD…LTEEYAGFYP (292 aa). Cys-334, His-385, and His-511 together coordinate Zn(2+).

The protein belongs to the class-II aminoacyl-tRNA synthetase family. In terms of assembly, homodimer. It depends on Zn(2+) as a cofactor.

The protein localises to the cytoplasm. It carries out the reaction tRNA(Thr) + L-threonine + ATP = L-threonyl-tRNA(Thr) + AMP + diphosphate + H(+). Catalyzes the attachment of threonine to tRNA(Thr) in a two-step reaction: L-threonine is first activated by ATP to form Thr-AMP and then transferred to the acceptor end of tRNA(Thr). Also edits incorrectly charged L-seryl-tRNA(Thr). The protein is Threonine--tRNA ligase of Serratia proteamaculans (strain 568).